Consider the following 392-residue polypeptide: Probable Ni/Fe-hydrogenase 2 b-type cytochrome subunit (392 aa).

The Periplasmic portion of the chain corresponds to 1–11 (MSHDPQPLGGK). A helical membrane pass occupies residues 12 to 32 (IISKPVMIFGPLIVICMLLIV). At 33-34 (KR) the chain is on the cytoplasmic side. A helical membrane pass occupies residues 35–55 (LVFGLGSVSDLNGGFPWGVWI). The Periplasmic portion of the chain corresponds to 56 to 58 (AFD). Residues 59–79 (LLIGTGFACGGWALAWAVYVF) form a helical membrane-spanning segment. Over 80-90 (NRGQYHPLVRP) the chain is Cytoplasmic. A helical transmembrane segment spans residues 91–111 (ALLASLFGYSLGGLSITIDVG). Residues 112–133 (RYWNLPYFYIPGHFNVNSVLFE) are Periplasmic-facing. The chain crosses the membrane as a helical span at residues 134-154 (TAVCMTIYIGVMALEFAPALF). Residues 155 to 168 (ERLGWKVSLQRLNK) are Cytoplasmic-facing. The helical transmembrane segment at 169–189 (VMFFIIALGALLPTMHQSSMG) threads the bilayer. Over 190-207 (SLMISAGYKVHPLWQSYE) the chain is Periplasmic. The helical transmembrane segment at 208-228 (MLPLFSLLTAFIMGFSIVIFE) threads the bilayer. Over 229 to 249 (GSLVQAGLRGNGPDEKSLFVK) the chain is Cytoplasmic. The chain crosses the membrane as a helical span at residues 250–270 (LTNTISVLLAIFIVLRFGELI). Topologically, residues 271–281 (YRDKLSLAFAG) are periplasmic. The helical transmembrane segment at 282–302 (DFYSVMFWIEVLLMLFPLVVL) threads the bilayer. The Cytoplasmic portion of the chain corresponds to 303–333 (RVAKLRNDSRMLFLSALSALLGCATWRLTYS). Residues 334–354 (LVAFNPGGGYAYFPTWEELLI) traverse the membrane as a helical segment. A topological domain (periplasmic) is located at residue S355. A helical transmembrane segment spans residues 356-376 (IGFVAIEICAYIVLIRLLPIL). Residues 377–392 (PPLKQNDHNRHEASKA) lie on the Cytoplasmic side of the membrane.

This sequence belongs to the NrfD family.

It is found in the cell inner membrane. Its function is as follows. Probable b-type cytochrome. The protein is Probable Ni/Fe-hydrogenase 2 b-type cytochrome subunit (hybB) of Escherichia coli (strain K12).